A 97-amino-acid chain; its full sequence is MAQKLDDSTRDEHLAPLMRAGWEMVEGRDAIKKTFVFGDFTEAFAFMTGTALWAEKWDHHPEWSNVYKTVEVTLTTHDVGGLSELDIKLASKMDNLA.

The protein belongs to the pterin-4-alpha-carbinolamine dehydratase family.

The enzyme catalyses (4aS,6R)-4a-hydroxy-L-erythro-5,6,7,8-tetrahydrobiopterin = (6R)-L-erythro-6,7-dihydrobiopterin + H2O. This chain is Putative pterin-4-alpha-carbinolamine dehydratase, found in Dinoroseobacter shibae (strain DSM 16493 / NCIMB 14021 / DFL 12).